The sequence spans 2869 residues: uncharacterized protein (2869 aa).

A compositionally biased stretch (low complexity) spans 1-10 (MNINRNNIND). 13 disordered regions span residues 1–132 (MNIN…SSNK), 171–349 (NNNN…DNYR), 380–485 (FNES…TSSS), 498–517 (KEKH…KPKK), 690–812 (NQNQ…NQNQ), 860–1074 (INNN…INSN), 1108–1175 (INNI…NSNS), 1188–1216 (SNSN…VDVD), 1224–1243 (VFIV…SVKT), 1340–1448 (ESNS…GNNI), 1476–1704 (IDNC…SNYY), 1731–1832 (NSNS…NEGF), and 2725–2773 (DRVR…NNNE). The segment covering 14-25 (HSTSFNDNFDSF) has biased composition (polar residues). 5 stretches are compositionally biased toward low complexity: residues 26–124 (GNQN…NPKN), 171–348 (NNNN…YDNY), 388–414 (NNNT…LNNN), 421–446 (YYDN…QTNK), and 454–478 (KNNN…NSNN). A compositionally biased stretch (basic and acidic residues) spans 505-514 (HENGDISESK). Composition is skewed to low complexity over residues 690 to 707 (NQNQ…QNHQ) and 714 to 749 (PQRQ…NQDQ). Over residues 750–763 (YQDHDHEHEHDHDQ) the composition is skewed to basic and acidic residues. Low complexity predominate over residues 764–781 (NQNQNQNQHQSRNQNQDQ). Positions 782-795 (YQDHDHEHEHDHDQ) are enriched in basic and acidic residues. Low complexity-rich tracts occupy residues 796 to 812 (NQNQ…NQNQ), 860 to 891 (INNN…QSQN), 898 to 911 (DNRI…SSRD), 921 to 991 (CDFN…SFNN), and 1000 to 1074 (NNHN…INSN). Residues 1188–1212 (SNSNGFNNNNSNDQRNIDSSSNSDI) show a composition bias toward low complexity. Polar residues predominate over residues 1230–1243 (TSSNKSNRASSVKT). Composition is skewed to low complexity over residues 1377 to 1448 (DNGN…GNNI) and 1476 to 1639 (IDNC…NDND). Residues 1640 to 1659 (IGNDFDNDNDNDSYIDDDNN) show a composition bias toward acidic residues. Low complexity-rich tracts occupy residues 1660-1704 (VYDN…SNYY), 1731-1823 (NSNS…NNNS), and 2739-2754 (SSSG…SGGS). Over residues 2758–2773 (NLDDSENESDSENNNE) the composition is skewed to acidic residues.

This is an uncharacterized protein from Dictyostelium discoideum (Social amoeba).